The primary structure comprises 503 residues: Aspartyl/glutamyl-tRNA(Asn/Gln) amidotransferase subunit B (503 aa).

This sequence belongs to the GatB/GatE family. GatB subfamily. Heterotrimer of A, B and C subunits.

The enzyme catalyses L-glutamyl-tRNA(Gln) + L-glutamine + ATP + H2O = L-glutaminyl-tRNA(Gln) + L-glutamate + ADP + phosphate + H(+). The catalysed reaction is L-aspartyl-tRNA(Asn) + L-glutamine + ATP + H2O = L-asparaginyl-tRNA(Asn) + L-glutamate + ADP + phosphate + 2 H(+). In terms of biological role, allows the formation of correctly charged Asn-tRNA(Asn) or Gln-tRNA(Gln) through the transamidation of misacylated Asp-tRNA(Asn) or Glu-tRNA(Gln) in organisms which lack either or both of asparaginyl-tRNA or glutaminyl-tRNA synthetases. The reaction takes place in the presence of glutamine and ATP through an activated phospho-Asp-tRNA(Asn) or phospho-Glu-tRNA(Gln). The protein is Aspartyl/glutamyl-tRNA(Asn/Gln) amidotransferase subunit B of Ruegeria pomeroyi (strain ATCC 700808 / DSM 15171 / DSS-3) (Silicibacter pomeroyi).